The following is a 154-amino-acid chain: 3-hydroxyacyl-[acyl-carrier-protein] dehydratase FabZ (154 aa).

The active site involves His-57.

The protein belongs to the thioester dehydratase family. FabZ subfamily.

Its subcellular location is the cytoplasm. The catalysed reaction is a (3R)-hydroxyacyl-[ACP] = a (2E)-enoyl-[ACP] + H2O. Its function is as follows. Involved in unsaturated fatty acids biosynthesis. Catalyzes the dehydration of short chain beta-hydroxyacyl-ACPs and long chain saturated and unsaturated beta-hydroxyacyl-ACPs. The protein is 3-hydroxyacyl-[acyl-carrier-protein] dehydratase FabZ of Allorhizobium ampelinum (strain ATCC BAA-846 / DSM 112012 / S4) (Agrobacterium vitis (strain S4)).